A 94-amino-acid polypeptide reads, in one-letter code: Small ribosomal subunit protein uS17 (94 aa).

The interval Met1 to Tyr22 is disordered.

It belongs to the universal ribosomal protein uS17 family. In terms of assembly, part of the 30S ribosomal subunit.

In terms of biological role, one of the primary rRNA binding proteins, it binds specifically to the 5'-end of 16S ribosomal RNA. This chain is Small ribosomal subunit protein uS17, found in Kineococcus radiotolerans (strain ATCC BAA-149 / DSM 14245 / SRS30216).